A 503-amino-acid polypeptide reads, in one-letter code: Alpha-1B-glycoprotein (503 aa).

The first 21 residues, 1 to 21 (MSAWAALLLLWGLSLSPVTEQ), serve as a signal peptide directing secretion. 5 Ig-like V-type domains span residues 27–115 (PRPS…EVTG), 117–204 (EPLP…TVTI), 208–305 (DPPP…LVLS), 307–405 (GTLP…LRVD), and 406–501 (GPLP…LRVA). C49 and C96 are oxidised to a cystine. N-linked (GlcNAc...) asparagine glycans are attached at residues N137 and N182. Disulfide bonds link C142-C185, C235-C282, C333-C382, and C431-C478. Residue N379 is glycosylated (N-linked (GlcNAc...) asparagine).

In terms of assembly, interacts with CRISP3. As to expression, plasma.

Its subcellular location is the secreted. This is Alpha-1B-glycoprotein from Bos taurus (Bovine).